Consider the following 316-residue polypeptide: Polyprenyl transferase ausN (316 aa).

9 consecutive transmembrane segments (helical) span residues 45–65 (VVGVAYTAAISPVTLPATFLL), 69–89 (VILSLWGFCIRSAGCAWNDLI), 108–128 (GAVSPSGAALLTAFMFGCGGS), 129–149 (LLLLLPSQCAFEAAIVVFFAL), 163–183 (LILTNIAWAIPMAMSSLDMNP), 188–208 (IPTLAMSFSIASVIVMIDIVY), 233–253 (DQIAYSLFFSGTLSLLAGGIL), 256–276 (LGIPFLIFSVGGHFVGFLRFL), and 296–316 (SCLLATVFLVFGLFFEYCVRL).

This sequence belongs to the UbiA prenyltransferase family. It depends on Mg(2+) as a cofactor.

It localises to the membrane. It catalyses the reaction 3,5-dimethylorsellinate + (2E,6E)-farnesyl diphosphate = (3R)-3-farnesyl-6-hydroxy-2,3,5-trimethyl-4-oxocyclohexa-1,5-diene-1-carboxylate + diphosphate + H(+). It participates in secondary metabolite biosynthesis; terpenoid biosynthesis. Functionally, polyprenyl transferase; part of the gene cluster A that mediates the biosynthesis of the fungal meroterpenoid acetoxydehydroaustin. The first step of the pathway is the synthesis of 3,5-dimethylorsellinic acid by the polyketide synthase ausA. 3,5-dimethylorsellinic acid is then prenylated by the polyprenyl transferase ausN. Further epoxidation by the FAD-dependent monooxygenase ausM and cyclization by the probable terpene cyclase ausL lead to the formation of protoaustinoid A. Protoaustinoid A is then oxidized to spiro-lactone preaustinoid A3 by the combined action of the FAD-binding monooxygenases ausB and ausC, and the dioxygenase ausE. Acid-catalyzed keto-rearrangement and ring contraction of the tetraketide portion of preaustinoid A3 by ausJ lead to the formation of preaustinoid A4. The aldo-keto reductase ausK, with the help of ausH, is involved in the next step by transforming preaustinoid A4 into isoaustinone which is in turn hydroxylated by the P450 monooxygenase ausI to form austinolide. The cytochrome P450 monooxygenase ausG then modifies austinolide to austinol. Austinol is further acetylated to austin by the O-acetyltransferase ausP, which spontaneously changes to dehydroaustin. The cytochrome P450 monooxygenase then converts dehydroaustin is into 7-dehydrodehydroaustin. The hydroxylation catalyzed by ausR permits the second O-acetyltransferase ausQ to add an additional acetyl group to the molecule, leading to the formation of acetoxydehydroaustin. Due to genetic rearrangements of the clusters and the subsequent loss of some enzymes, the end product of the Penicillium brasilianum austinoid biosynthesis clusters is acetoxydehydroaustin. This chain is Polyprenyl transferase ausN, found in Penicillium brasilianum.